Reading from the N-terminus, the 51-residue chain is UPF0320 protein YOL166W-A (51 aa).

The protein belongs to the UPF0320 family.

This chain is UPF0320 protein YOL166W-A, found in Saccharomyces cerevisiae (strain ATCC 204508 / S288c) (Baker's yeast).